We begin with the raw amino-acid sequence, 488 residues long: N-succinylglutamate 5-semialdehyde dehydrogenase 2 (488 aa).

221 to 226 (GSSNTG) provides a ligand contact to NAD(+). Catalysis depends on residues E244 and C278.

It belongs to the aldehyde dehydrogenase family. AstD subfamily.

It catalyses the reaction N-succinyl-L-glutamate 5-semialdehyde + NAD(+) + H2O = N-succinyl-L-glutamate + NADH + 2 H(+). The protein operates within amino-acid degradation; L-arginine degradation via AST pathway; L-glutamate and succinate from L-arginine: step 4/5. In terms of biological role, catalyzes the NAD-dependent reduction of succinylglutamate semialdehyde into succinylglutamate. In Pseudoalteromonas translucida (strain TAC 125), this protein is N-succinylglutamate 5-semialdehyde dehydrogenase 2.